Here is a 175-residue protein sequence, read N- to C-terminus: Hypoxanthine-guanine phosphoribosyltransferase (175 aa).

The diphosphate site is built by lysine 40 and glycine 41. Residues glutamate 96 and aspartate 97 each coordinate Mg(2+). The active-site Proton acceptor is the aspartate 100. GMP contacts are provided by residues lysine 128, 149–150 (FL), and aspartate 156. Arginine 162 provides a ligand contact to diphosphate.

This sequence belongs to the purine/pyrimidine phosphoribosyltransferase family. Requires Mg(2+) as cofactor.

Its subcellular location is the cytoplasm. It carries out the reaction IMP + diphosphate = hypoxanthine + 5-phospho-alpha-D-ribose 1-diphosphate. The catalysed reaction is GMP + diphosphate = guanine + 5-phospho-alpha-D-ribose 1-diphosphate. Its pathway is purine metabolism; IMP biosynthesis via salvage pathway; IMP from hypoxanthine: step 1/1. It functions in the pathway purine metabolism; GMP biosynthesis via salvage pathway; GMP from guanine: step 1/1. Purine salvage pathway enzyme that catalyzes the transfer of the ribosyl-5-phosphate group from 5-phospho-alpha-D-ribose 1-diphosphate (PRPP) to the N9 position of the 6-oxopurines hypoxanthine and guanine to form the corresponding ribonucleotides IMP (inosine 5'-monophosphate) and GMP (guanosine 5'-monophosphate), with the release of PPi. This Mycoplasma pneumoniae (strain ATCC 29342 / M129 / Subtype 1) (Mycoplasmoides pneumoniae) protein is Hypoxanthine-guanine phosphoribosyltransferase (hpt).